Reading from the N-terminus, the 518-residue chain is Lysine--tRNA ligase (518 aa).

2 residues coordinate Mg(2+): Glu-407 and Glu-414.

This sequence belongs to the class-II aminoacyl-tRNA synthetase family. Homodimer. Requires Mg(2+) as cofactor.

It is found in the cytoplasm. It carries out the reaction tRNA(Lys) + L-lysine + ATP = L-lysyl-tRNA(Lys) + AMP + diphosphate. This is Lysine--tRNA ligase from Helicobacter hepaticus (strain ATCC 51449 / 3B1).